We begin with the raw amino-acid sequence, 274 residues long: Cyclase-like protein 1 (274 aa).

The first 18 residues, 1–18 (MAASRLALLLLVLAVAAA), serve as a signal peptide directing secretion.

It belongs to the Cyclase 1 superfamily. Highly expressed in leaf sheaths. Expressed in leaf collars.

Its subcellular location is the secreted. It localises to the extracellular space. The protein localises to the extracellular matrix. Functionally, may be involved in response to stresses. The polypeptide is Cyclase-like protein 1 (Oryza sativa subsp. japonica (Rice)).